The chain runs to 515 residues: SWI/SNF global transcription activator complex subunit snf59 (515 aa).

The disordered stretch occupies residues 1 to 226 (MEEEDITLEH…IHHVDSKNEE (226 aa)). 5 stretches are compositionally biased toward basic and acidic residues: residues 7 to 37 (TLEH…DNSN), 50 to 59 (EEPKYHDNSN), 73 to 85 (EPEH…KEST), 94 to 103 (EEPKHHDNSN), and 116 to 125 (EEPKHHDSSN). A compositionally biased stretch (polar residues) spans 126-136 (KESTNLDNSNM). A compositionally biased stretch (basic and acidic residues) spans 140–226 (ENQKNFKIEE…IHHVDSKNEE (87 aa)).

Belongs to the RSC7/SWP82 family. SWP82 subfamily. In terms of assembly, component of the SWI/SNF global transcription activator complex composed of at least arp9, arp42, snf5, snf22, snf30, snf59, sol1, ssr1, ssr2, ssr3, ssr4 and tfg3.

It localises to the nucleus. Functionally, component of the SWI/SNF complex, an ATP-dependent chromatin remodeling complex, which is required for the positive and negative regulation of gene expression of a large number of genes. It changes chromatin structure by altering DNA-histone contacts within a nucleosome, leading eventually to a change in nucleosome position, thus facilitating or repressing binding of gene-specific transcription factors. The polypeptide is SWI/SNF global transcription activator complex subunit snf59 (snf59) (Schizosaccharomyces pombe (strain 972 / ATCC 24843) (Fission yeast)).